The following is a 384-amino-acid chain: MREFLEETLQKIEAAGLRRSLRPLEPLGPTRALFNGREVTLFCTNNYLGLTHHPRVTARAQEALRKYGTGSGAARLVSGHNPLLQALEEALARCKGSPRALVFPTGYTANLAVIGTLAGREDVIFCDRLCHASLLDGCLLSGAKLVRFSHNDADSLRRLLNQHTGRRRFIVTEGLFSMDGDIPPLPEFYTLAQEFEAILIVDDAHGTGVLGPNGRGTVADAGIPAERIVISGTLSKALASLGGFVTGPGLLSEFLLNRARSFIFTTALPPVSAAAALAALEVLEAEPAILEGLWENVMRFRQGLNARGLPASGNSPIIPLILGSPERALRAAENLLEQGYYVPAIRPPAVPPGTARLRITVSAAHTPAEIDGFLNALGKALEEA.

Substrate is bound at residue R19. 106–107 lines the pyridoxal 5'-phosphate pocket; it reads GY. H131 is a substrate binding site. Pyridoxal 5'-phosphate is bound by residues S177, 202-205, and 233-236; these read DDAH and TLSK. K236 is subject to N6-(pyridoxal phosphate)lysine.

This sequence belongs to the class-II pyridoxal-phosphate-dependent aminotransferase family. BioF subfamily. As to quaternary structure, homodimer. It depends on pyridoxal 5'-phosphate as a cofactor.

The enzyme catalyses 6-carboxyhexanoyl-[ACP] + L-alanine + H(+) = (8S)-8-amino-7-oxononanoate + holo-[ACP] + CO2. It participates in cofactor biosynthesis; biotin biosynthesis. Its function is as follows. Catalyzes the decarboxylative condensation of pimeloyl-[acyl-carrier protein] and L-alanine to produce 8-amino-7-oxononanoate (AON), [acyl-carrier protein], and carbon dioxide. This Desulforudis audaxviator (strain MP104C) protein is Putative 8-amino-7-oxononanoate synthase (bioF).